Consider the following 502-residue polypeptide: Phenylalanine--tRNA ligase alpha subunit (502 aa).

L-phenylalanine contacts are provided by residues Thr-339, Gln-382–Glu-384, and Tyr-422. Position 424 (Glu-424) interacts with Mg(2+). Phe-448 serves as a coordination point for L-phenylalanine.

Belongs to the class-II aminoacyl-tRNA synthetase family. Phe-tRNA synthetase alpha subunit type 2 subfamily. In terms of assembly, tetramer of two alpha and two beta subunits. The cofactor is Mg(2+).

The protein localises to the cytoplasm. The catalysed reaction is tRNA(Phe) + L-phenylalanine + ATP = L-phenylalanyl-tRNA(Phe) + AMP + diphosphate + H(+). The protein is Phenylalanine--tRNA ligase alpha subunit of Halobacterium salinarum (strain ATCC 29341 / DSM 671 / R1).